We begin with the raw amino-acid sequence, 389 residues long: Chaperone protein DnaJ (389 aa).

A J domain is found at 5–79 (KRDYYEVLGI…RKLYDQFGHE (75 aa)). A CR-type zinc finger spans residues 151-234 (GCNKTIKYER…CRSNKYTVTN (84 aa)). Zn(2+) contacts are provided by cysteine 164, cysteine 167, cysteine 182, cysteine 185, cysteine 208, cysteine 211, cysteine 222, and cysteine 225. 4 CXXCXGXG motif repeats span residues 164–171 (CHSCNGFG), 182–189 (CKDCNGNG), 208–215 (CSTCNGQG), and 222–229 (CKTCRSNK).

It belongs to the DnaJ family. In terms of assembly, homodimer. Requires Zn(2+) as cofactor.

It is found in the cytoplasm. In terms of biological role, participates actively in the response to hyperosmotic and heat shock by preventing the aggregation of stress-denatured proteins and by disaggregating proteins, also in an autonomous, DnaK-independent fashion. Unfolded proteins bind initially to DnaJ; upon interaction with the DnaJ-bound protein, DnaK hydrolyzes its bound ATP, resulting in the formation of a stable complex. GrpE releases ADP from DnaK; ATP binding to DnaK triggers the release of the substrate protein, thus completing the reaction cycle. Several rounds of ATP-dependent interactions between DnaJ, DnaK and GrpE are required for fully efficient folding. Also involved, together with DnaK and GrpE, in the DNA replication of plasmids through activation of initiation proteins. The polypeptide is Chaperone protein DnaJ (Mycoplasma genitalium (strain ATCC 33530 / DSM 19775 / NCTC 10195 / G37) (Mycoplasmoides genitalium)).